Consider the following 390-residue polypeptide: Putative transposase YncI (390 aa).

Belongs to the transposase 11 family.

This Escherichia coli O157:H7 protein is Putative transposase YncI (yncI).